The following is a 284-amino-acid chain: Homeobox protein CDX-4 (284 aa).

Disordered stretches follow at residues 15–40 (PGTL…SPMP) and 120–155 (GGGT…SRHS). Positions 22–37 (GGDGTAGTGGTGGGGS) are enriched in gly residues. Residues 173 to 232 (KEKYRVVYTDHQRLELEKEFHCNRYITIQRKSELAVNLGLSERQVKIWFQNRRAKERKMI) constitute a DNA-binding region (homeobox). Over residues 238–253 (QFENSGGSVQSDSDSI) the composition is skewed to polar residues. The interval 238 to 259 (QFENSGGSVQSDSDSISPGELP) is disordered.

This sequence belongs to the Caudal homeobox family.

Its subcellular location is the nucleus. The protein is Homeobox protein CDX-4 (CDX4) of Homo sapiens (Human).